A 1486-amino-acid polypeptide reads, in one-letter code: Chromosome partition protein MukB (1486 aa).

34-41 (GGNGAGKS) contacts ATP. Coiled-coil stretches lie at residues 326–418 (LEAD…QYNQ), 444–480 (LETFQAKELEATEKMLSLEQKMSMAQTAHSQFEQAYQ), and 509–603 (RHLA…RAPV). The tract at residues 666–783 (PGGSEDQRLN…EVPLFGRAAR (118 aa)) is flexible hinge. Coiled-coil stretches lie at residues 835–923 (EAEI…AKLE), 977–1115 (EMLS…TAKA), and 1209–1266 (VEAI…QNVS).

Belongs to the SMC family. MukB subfamily. In terms of assembly, homodimerization via its hinge domain. Binds to DNA via its C-terminal region. Interacts, and probably forms a ternary complex, with MukE and MukF via its C-terminal region. The complex formation is stimulated by calcium or magnesium. Interacts with tubulin-related protein FtsZ.

The protein resides in the cytoplasm. The protein localises to the nucleoid. In terms of biological role, plays a central role in chromosome condensation, segregation and cell cycle progression. Functions as a homodimer, which is essential for chromosome partition. Involved in negative DNA supercoiling in vivo, and by this means organize and compact chromosomes. May achieve or facilitate chromosome segregation by condensation DNA from both sides of a centrally located replisome during cell division. The chain is Chromosome partition protein MukB from Escherichia coli O9:H4 (strain HS).